We begin with the raw amino-acid sequence, 172 residues long: 3-phenylpropionate/cinnamic acid dioxygenase subunit beta (172 aa).

Belongs to the bacterial ring-hydroxylating dioxygenase beta subunit family. This dioxygenase system consists of four proteins: the two subunits of the hydroxylase component (HcaE and HcaF), a ferredoxin (HcaC) and a ferredoxin reductase (HcaD).

It carries out the reaction 3-phenylpropanoate + NADH + O2 + H(+) = 3-(cis-5,6-dihydroxycyclohexa-1,3-dien-1-yl)propanoate + NAD(+). The enzyme catalyses (E)-cinnamate + NADH + O2 + H(+) = (2E)-3-(cis-5,6-dihydroxycyclohexa-1,3-dien-1-yl)prop-2-enoate + NAD(+). It participates in aromatic compound metabolism; 3-phenylpropanoate degradation. Functionally, part of the multicomponent 3-phenylpropionate dioxygenase. Converts 3-phenylpropionic acid (PP) and cinnamic acid (CI) into 3-phenylpropionate-dihydrodiol (PP-dihydrodiol) and cinnamic acid-dihydrodiol (CI-dihydrodiol), respectively. This Shigella sonnei (strain Ss046) protein is 3-phenylpropionate/cinnamic acid dioxygenase subunit beta.